Reading from the N-terminus, the 156-residue chain is Small ribosomal subunit protein uS7 (156 aa).

This sequence belongs to the universal ribosomal protein uS7 family. In terms of assembly, part of the 30S ribosomal subunit. Contacts proteins S9 and S11.

Functionally, one of the primary rRNA binding proteins, it binds directly to 16S rRNA where it nucleates assembly of the head domain of the 30S subunit. Is located at the subunit interface close to the decoding center, probably blocks exit of the E-site tRNA. This chain is Small ribosomal subunit protein uS7, found in Synechococcus sp. (strain RCC307).